A 112-amino-acid polypeptide reads, in one-letter code: EGDAAAGEKVSKKCLACHTFDQGGANKVGPNLFGVFENTAAHKDNYAYSESYTEMKAKGLTWTEANLAAYVKNPKAFVLEKSGDPKAKSKMTFKLTKDDEIENVIAYLKTLK.

Heme c contacts are provided by cysteine 14, cysteine 17, histidine 18, and methionine 91.

It belongs to the cytochrome c family. In terms of processing, binds 1 heme c group covalently per subunit.

Cytochrome c2 is found mainly in purple, non-sulfur, photosynthetic bacteria where it functions as the electron donor to the oxidized bacteriochlorophyll in the photophosphorylation pathway. However, it may also have a role in the respiratory chain and is found in some non-photosynthetic bacteria. The chain is Cytochrome c2 (cycA) from Rhodospirillum rubrum.